The chain runs to 347 residues: GMP reductase (347 aa).

108-131 is an NADP(+) binding site; it reads ADFVKMQQILALSPGLKFICIDVA. Residues Gly181 and Gly183 each contribute to the K(+) site. Cys186 (thioimidate intermediate) is an active-site residue. Residue 216–239 participates in NADP(+) binding; it reads IVSDGGCSVPGDVAKAFGGGADFV.

The protein belongs to the IMPDH/GMPR family. GuaC type 1 subfamily. Homotetramer.

It catalyses the reaction IMP + NH4(+) + NADP(+) = GMP + NADPH + 2 H(+). Its function is as follows. Catalyzes the irreversible NADPH-dependent deamination of GMP to IMP. It functions in the conversion of nucleobase, nucleoside and nucleotide derivatives of G to A nucleotides, and in maintaining the intracellular balance of A and G nucleotides. In Serratia proteamaculans (strain 568), this protein is GMP reductase.